We begin with the raw amino-acid sequence, 485 residues long: Aspartyl/glutamyl-tRNA(Asn/Gln) amidotransferase subunit B (485 aa).

The protein belongs to the GatB/GatE family. GatB subfamily. In terms of assembly, heterotrimer of A, B and C subunits.

It catalyses the reaction L-glutamyl-tRNA(Gln) + L-glutamine + ATP + H2O = L-glutaminyl-tRNA(Gln) + L-glutamate + ADP + phosphate + H(+). The enzyme catalyses L-aspartyl-tRNA(Asn) + L-glutamine + ATP + H2O = L-asparaginyl-tRNA(Asn) + L-glutamate + ADP + phosphate + 2 H(+). Its function is as follows. Allows the formation of correctly charged Asn-tRNA(Asn) or Gln-tRNA(Gln) through the transamidation of misacylated Asp-tRNA(Asn) or Glu-tRNA(Gln) in organisms which lack either or both of asparaginyl-tRNA or glutaminyl-tRNA synthetases. The reaction takes place in the presence of glutamine and ATP through an activated phospho-Asp-tRNA(Asn) or phospho-Glu-tRNA(Gln). This chain is Aspartyl/glutamyl-tRNA(Asn/Gln) amidotransferase subunit B, found in Borrelia duttonii (strain Ly).